Consider the following 407-residue polypeptide: Argininosuccinate synthase (407 aa).

An ATP-binding site is contributed by 8–16 (AYSGGLDTT). L-citrulline is bound by residues Y86 and S91. G116 is a binding site for ATP. Positions 118, 122, and 123 each coordinate L-aspartate. An L-citrulline-binding site is contributed by N122. Residues R126, S178, S187, E264, and Y276 each coordinate L-citrulline.

It belongs to the argininosuccinate synthase family. Type 1 subfamily. In terms of assembly, homotetramer.

It localises to the cytoplasm. The enzyme catalyses L-citrulline + L-aspartate + ATP = 2-(N(omega)-L-arginino)succinate + AMP + diphosphate + H(+). The protein operates within amino-acid biosynthesis; L-arginine biosynthesis; L-arginine from L-ornithine and carbamoyl phosphate: step 2/3. The protein is Argininosuccinate synthase of Lachnoclostridium phytofermentans (strain ATCC 700394 / DSM 18823 / ISDg) (Clostridium phytofermentans).